Reading from the N-terminus, the 132-residue chain is UPF0299 membrane protein YohJ (132 aa).

4 consecutive transmembrane segments (helical) span residues 7–27, 31–51, 63–83, and 93–113; these read IIWQ…AGIF, LLPI…VLLA, GCYV…VGVM, and FGPV…VVSW.

It belongs to the UPF0299 family.

Its subcellular location is the cell inner membrane. The protein is UPF0299 membrane protein YohJ of Salmonella arizonae (strain ATCC BAA-731 / CDC346-86 / RSK2980).